Reading from the N-terminus, the 280-residue chain is Proteasome subunit beta (280 aa).

Positions M1 to G53 are cleaved as a propeptide — removed in mature form; by autocatalysis. The active-site Nucleophile is T54.

It belongs to the peptidase T1B family. In terms of assembly, the 20S proteasome core is composed of 14 alpha and 14 beta subunits that assemble into four stacked heptameric rings, resulting in a barrel-shaped structure. The two inner rings, each composed of seven catalytic beta subunits, are sandwiched by two outer rings, each composed of seven alpha subunits. The catalytic chamber with the active sites is on the inside of the barrel. Has a gated structure, the ends of the cylinder being occluded by the N-termini of the alpha-subunits. Is capped by the proteasome-associated ATPase, ARC.

It localises to the cytoplasm. The enzyme catalyses Cleavage of peptide bonds with very broad specificity.. Its pathway is protein degradation; proteasomal Pup-dependent pathway. Its activity is regulated as follows. The formation of the proteasomal ATPase ARC-20S proteasome complex, likely via the docking of the C-termini of ARC into the intersubunit pockets in the alpha-rings, may trigger opening of the gate for substrate entry. Interconversion between the open-gate and close-gate conformations leads to a dynamic regulation of the 20S proteasome proteolysis activity. In terms of biological role, component of the proteasome core, a large protease complex with broad specificity involved in protein degradation. The sequence is that of Proteasome subunit beta from Geodermatophilus obscurus (strain ATCC 25078 / DSM 43160 / JCM 3152 / CCUG 61914 / KCC A-0152 / KCTC 9177 / NBRC 13315 / NRRL B-3577 / G-20).